Reading from the N-terminus, the 434-residue chain is Adenylosuccinate synthetase (434 aa).

Residues 22 to 28 (GDEGKGK) and 50 to 52 (GHT) each bind GTP. Aspartate 23 (proton acceptor) is an active-site residue. Mg(2+) contacts are provided by aspartate 23 and glycine 50. IMP is bound by residues 23-26 (DEGK), 48-51 (NAGH), threonine 139, arginine 153, glutamine 234, threonine 249, and arginine 313. Histidine 51 (proton donor) is an active-site residue. Residue 309 to 315 (ATTGRKR) coordinates substrate. GTP is bound by residues arginine 315, 341–343 (KLD), and 423–425 (SVG).

Belongs to the adenylosuccinate synthetase family. Homodimer. Mg(2+) serves as cofactor.

Its subcellular location is the cytoplasm. The enzyme catalyses IMP + L-aspartate + GTP = N(6)-(1,2-dicarboxyethyl)-AMP + GDP + phosphate + 2 H(+). The protein operates within purine metabolism; AMP biosynthesis via de novo pathway; AMP from IMP: step 1/2. Its function is as follows. Plays an important role in the de novo pathway of purine nucleotide biosynthesis. Catalyzes the first committed step in the biosynthesis of AMP from IMP. The polypeptide is Adenylosuccinate synthetase (Pelodictyon phaeoclathratiforme (strain DSM 5477 / BU-1)).